Consider the following 566-residue polypeptide: Phosphatidylinositol 3,4,5-trisphosphate 3-phosphatase TPTE2 (566 aa).

Transmembrane regions (helical) follow at residues 135–155, 173–193, 208–228, and 234–254; these read SFAF…LLLA, ISLA…FVEG, AIIV…IKFL, and WIHL…HLIH. The 177-residue stretch at 272–448 folds into the Phosphatase tensin-type domain; it reads RRYTRDGFDL…GYFAQVKHLY (177 aa). The active-site Phosphocysteine intermediate is C382. Positions 455–566 constitute a C2 tensin-type domain; the sequence is RRILFIKRFI…ILHSFRLVFT (112 aa).

The protein localises to the endoplasmic reticulum membrane. Its subcellular location is the golgi apparatus membrane. The catalysed reaction is a 1,2-diacyl-sn-glycero-3-phospho-(1D-myo-inositol-3,4,5-trisphosphate) + H2O = a 1,2-diacyl-sn-glycero-3-phospho-(1D-myo-inositol-4,5-bisphosphate) + phosphate. Its function is as follows. Acts as a lipid phosphatase, removing the phosphate in the D3 position of the inositol ring from phosphatidylinositol 3,4,5-trisphosphate. The sequence is that of Phosphatidylinositol 3,4,5-trisphosphate 3-phosphatase TPTE2 (TPTE2) from Macaca fascicularis (Crab-eating macaque).